Here is a 94-residue protein sequence, read N- to C-terminus: Large ribosomal subunit protein uL23 (94 aa).

The protein belongs to the universal ribosomal protein uL23 family. As to quaternary structure, part of the 50S ribosomal subunit. Contacts protein L29, and trigger factor when it is bound to the ribosome.

Its function is as follows. One of the early assembly proteins it binds 23S rRNA. One of the proteins that surrounds the polypeptide exit tunnel on the outside of the ribosome. Forms the main docking site for trigger factor binding to the ribosome. This is Large ribosomal subunit protein uL23 from Mycoplasma mycoides subsp. mycoides SC (strain CCUG 32753 / NCTC 10114 / PG1).